The primary structure comprises 408 residues: Serine/threonine-protein kinase ATG1t (408 aa).

The Protein kinase domain maps to tyrosine 7–valine 272. ATP is bound by residues leucine 13–valine 21 and lysine 36. Residue aspartate 129 is the Proton acceptor of the active site.

Belongs to the protein kinase superfamily. Ser/Thr protein kinase family.

It localises to the cytoplasmic vesicle. It is found in the autophagosome. Its function is as follows. Serine/threonine protein kinase involved in autophagy. The ATG1-ATG13 protein kinase complex regulates downstream events required for autophagosome enclosure and/or vacuolar delivery. This is Serine/threonine-protein kinase ATG1t from Arabidopsis thaliana (Mouse-ear cress).